A 393-amino-acid chain; its full sequence is Cell division protein FtsZ 2 (393 aa).

Residues 1-28 (MQDIVQDALDNAEAEQREMDGDGDGDEF) form a disordered region. Residues 40 to 44 (GAGNN), 127 to 129 (GTG), glutamate 158, arginine 161, and aspartate 204 each bind GTP. Residues 339-393 (GPSTQKQADKSRRELQDVDSKQRAADDAGAGGFGGAHSDGGQDEVEQENGLDVIR) are disordered. The segment covering 345–364 (QADKSRRELQDVDSKQRAAD) has biased composition (basic and acidic residues). A compositionally biased stretch (gly residues) spans 367-376 (GAGGFGGAHS).

The protein belongs to the FtsZ family. As to quaternary structure, homodimer. Polymerizes to form a dynamic ring structure in a strictly GTP-dependent manner. Interacts directly with several other division proteins.

The protein resides in the cytoplasm. Its function is as follows. Essential cell division protein that forms a contractile ring structure (Z ring) at the future cell division site. The regulation of the ring assembly controls the timing and the location of cell division. One of the functions of the FtsZ ring is to recruit other cell division proteins to the septum to produce a new cell wall between the dividing cells. Binds GTP and shows GTPase activity. Overexpression causes significant changes in cell morphology. In Halobacterium salinarum (strain ATCC 29341 / DSM 671 / R1), this protein is Cell division protein FtsZ 2.